Consider the following 417-residue polypeptide: Brevican core protein (417 aa).

An N-terminal signal peptide occupies residues 1 to 22 (MAPLFLPLLIALALAPGPTASA). The 133-residue stretch at 23–155 (DVLEGDSSED…SSDAVEVKVK (133 aa)) folds into the Ig-like V-type domain. Intrachain disulfides connect C57–C137, C179–C250, and C203–C224. N-linked (GlcNAc...) asparagine glycosylation occurs at N130. Link domains lie at 157 to 252 (VVFL…YCYA) and 257 to 354 (GELF…YCFR). An N-linked (GlcNAc...) asparagine glycan is attached at N267. 2 cysteine pairs are disulfide-bonded: C277–C352 and C301–C322. N-linked (GlcNAc...) asparagine glycosylation is present at N337.

This sequence belongs to the aggrecan/versican proteoglycan family. In terms of tissue distribution, central nervous system.

It is found in the secreted. Its subcellular location is the extracellular space. The protein localises to the extracellular matrix. In terms of biological role, may play a role in the terminally differentiating and the adult nervous system during postnatal development. Could stabilize interactions between hyaluronan (HA) and brain proteoglycans. The polypeptide is Brevican core protein (BCAN) (Felis catus (Cat)).